Consider the following 97-residue polypeptide: Secreted Ly-6/uPAR domain-containing protein 2 (97 aa).

An N-terminal signal peptide occupies residues 1 to 22 (MQFHTGLLLAAVLSLQLAAAQA). Residues 23-95 (LWCHQCTGFG…IACCQTSLCN (73 aa)) enclose the UPAR/Ly6 domain. Cystine bridges form between Cys-25–Cys-47, Cys-28–Cys-34, Cys-40–Cys-68, Cys-72–Cys-88, and Cys-89–Cys-94.

In terms of assembly, interacts with CHRNA3, CHRNA4, CHRNA5, CHRNA7, CHRNB2 and CHRNB4. Interacts with CHRM1 and CHRM3 probably in an allosteric manner.

Its subcellular location is the secreted. Its function is as follows. Binds and may modulate the functional properties of nicotinic and muscarinic acetylcholine receptors. May regulate keratinocytes proliferation, differentiation and apoptosis. In vitro moderately inhibits ACh-evoked currents of alpha-3:beta-2-containing nAChRs, strongly these of alpha-4:beta-2-containing nAChRs, modulates alpha-7-containing nAChRs, and inhibits nicotine-induced signaling probably implicating alpha-3:beta-4-containing nAChRs. Proposed to act on alpha-3:beta-2 and alpha-7 nAChRs in an orthosteric, and on mAChRs, such as CHRM1 and CHRM3, in an allosteric manner. The protein is Secreted Ly-6/uPAR domain-containing protein 2 of Macaca mulatta (Rhesus macaque).